The primary structure comprises 250 residues: ATP synthase subunit a (250 aa).

The next 5 helical transmembrane spans lie at 27–47, 83–103, 129–149, 191–211, and 219–239; these read TDTV…AFYL, IAPF…ISNW, INYV…AGIW, IFAG…IMWA, and FDLF…ILYF.

The protein belongs to the ATPase A chain family. F-type ATPases have 2 components, CF(1) - the catalytic core - and CF(0) - the membrane proton channel. CF(1) has five subunits: alpha(3), beta(3), gamma(1), delta(1), epsilon(1). CF(0) has three main subunits: a(1), b(2) and c(9-12). The alpha and beta chains form an alternating ring which encloses part of the gamma chain. CF(1) is attached to CF(0) by a central stalk formed by the gamma and epsilon chains, while a peripheral stalk is formed by the delta and b chains.

Its subcellular location is the cell membrane. Its function is as follows. Key component of the proton channel; it plays a direct role in the translocation of protons across the membrane. The sequence is that of ATP synthase subunit a from Mycobacterium marinum (strain ATCC BAA-535 / M).